The sequence spans 209 residues: Probable GTP-binding protein EngB (209 aa).

The EngB-type G domain maps to 23–198; that stretch reads NGAEIAFAGR…EKVVAGWLVP (176 aa). GTP is bound by residues 31 to 38, 58 to 62, 76 to 79, 143 to 146, and 177 to 179; these read GRSNAGKS, GRTQL, DLPG, TKSD, and FSS. Residues S38 and T60 each contribute to the Mg(2+) site.

Belongs to the TRAFAC class TrmE-Era-EngA-EngB-Septin-like GTPase superfamily. EngB GTPase family. It depends on Mg(2+) as a cofactor.

Necessary for normal cell division and for the maintenance of normal septation. This Azoarcus sp. (strain BH72) protein is Probable GTP-binding protein EngB.